Reading from the N-terminus, the 516-residue chain is 2-isopropylmalate synthase (516 aa).

The Pyruvate carboxyltransferase domain maps to 5–268; that stretch reads LIIFDTTLRD…DLGIDTTQIV (264 aa). Mn(2+)-binding residues include aspartate 14, histidine 202, histidine 204, and asparagine 239. The segment at 395–516 is regulatory domain; the sequence is KFVSLSQHSE…DKLNPQRADI (122 aa).

It belongs to the alpha-IPM synthase/homocitrate synthase family. LeuA type 1 subfamily. As to quaternary structure, homodimer. The cofactor is Mn(2+).

It is found in the cytoplasm. The enzyme catalyses 3-methyl-2-oxobutanoate + acetyl-CoA + H2O = (2S)-2-isopropylmalate + CoA + H(+). The protein operates within amino-acid biosynthesis; L-leucine biosynthesis; L-leucine from 3-methyl-2-oxobutanoate: step 1/4. Its function is as follows. Catalyzes the condensation of the acetyl group of acetyl-CoA with 3-methyl-2-oxobutanoate (2-ketoisovalerate) to form 3-carboxy-3-hydroxy-4-methylpentanoate (2-isopropylmalate). In Paraburkholderia phymatum (strain DSM 17167 / CIP 108236 / LMG 21445 / STM815) (Burkholderia phymatum), this protein is 2-isopropylmalate synthase.